Consider the following 433-residue polypeptide: 26S proteasome regulatory subunit 7 (433 aa).

The tract at residues 1–22 is disordered; sequence MPDYLGADQRKTKEDEKDDKPI. Residues 8 to 22 are compositionally biased toward basic and acidic residues; sequence DQRKTKEDEKDDKPI. K116 bears the N6-acetyllysine mark. ATP is bound at residue 216 to 223; that stretch reads GPPGTGKT. K422 carries the N6-acetyllysine modification.

Belongs to the AAA ATPase family. In terms of assembly, component of the 19S proteasome regulatory particle complex. The 26S proteasome consists of a 20S core particle (CP) and two 19S regulatory subunits (RP). The regulatory particle is made of a lid composed of 9 subunits, a base containing 6 ATPases including PSMC2 and few additional components. Interacts with NDC80/HEC; this interaction is detected only during M phase. Interacts and SQSTM1. Interacts with PAAF1. Directly interacts with TRIM5. Post-translationally, monoubiquitinated by RNF181. In terms of processing, phosphorylated. Dephosphorylated by UBLCP1 which impairs PSMC2 ATPase activity and disrupts 26S proteasome assembly.

The protein localises to the cytoplasm. It localises to the nucleus. Functionally, component of the 26S proteasome, a multiprotein complex involved in the ATP-dependent degradation of ubiquitinated proteins. This complex plays a key role in the maintenance of protein homeostasis by removing misfolded or damaged proteins, which could impair cellular functions, and by removing proteins whose functions are no longer required. Therefore, the proteasome participates in numerous cellular processes, including cell cycle progression, apoptosis, or DNA damage repair. PSMC2 belongs to the heterohexameric ring of AAA (ATPases associated with diverse cellular activities) proteins that unfolds ubiquitinated target proteins that are concurrently translocated into a proteolytic chamber and degraded into peptides. This is 26S proteasome regulatory subunit 7 (PSMC2) from Pongo abelii (Sumatran orangutan).